The sequence spans 277 residues: Phosphatidylglycerol--prolipoprotein diacylglyceryl transferase (277 aa).

A run of 4 helical transmembrane segments spans residues 11 to 31 (IIFS…LISF), 55 to 75 (LLYI…IIFY), 93 to 113 (GGMS…YLSL), and 117 to 137 (VKIL…LGAG). An a 1,2-diacyl-sn-glycero-3-phospho-(1'-sn-glycerol)-binding site is contributed by Arg138. 3 helical membrane-spanning segments follow: residues 192–212 (PSQL…IYFF), 220–240 (GSIS…SEFF), and 256–276 (MGQI…NLFI).

This sequence belongs to the Lgt family.

It is found in the cell inner membrane. The enzyme catalyses L-cysteinyl-[prolipoprotein] + a 1,2-diacyl-sn-glycero-3-phospho-(1'-sn-glycerol) = an S-1,2-diacyl-sn-glyceryl-L-cysteinyl-[prolipoprotein] + sn-glycerol 1-phosphate + H(+). It functions in the pathway protein modification; lipoprotein biosynthesis (diacylglyceryl transfer). Functionally, catalyzes the transfer of the diacylglyceryl group from phosphatidylglycerol to the sulfhydryl group of the N-terminal cysteine of a prolipoprotein, the first step in the formation of mature lipoproteins. In Buchnera aphidicola subsp. Schizaphis graminum (strain Sg), this protein is Phosphatidylglycerol--prolipoprotein diacylglyceryl transferase.